A 339-amino-acid chain; its full sequence is N-acetylornithine carbamoyltransferase (339 aa).

Residues 49 to 52 (SMRT), Trp77, and Arg112 contribute to the carbamoyl phosphate site. Glu144 is a N(2)-acetyl-L-ornithine binding site. Residue 148–151 (HPCQ) coordinates carbamoyl phosphate. Residues Lys252 and Leu295 each coordinate N(2)-acetyl-L-ornithine. 294-295 (CL) lines the carbamoyl phosphate pocket. N6-carboxylysine is present on Lys302. Arg322 is a binding site for carbamoyl phosphate.

Belongs to the aspartate/ornithine carbamoyltransferase superfamily. AOTCase family. As to quaternary structure, homotrimer.

It localises to the cytoplasm. It carries out the reaction N(2)-acetyl-L-ornithine + carbamoyl phosphate = N(2)-acetyl-L-citrulline + phosphate + H(+). It functions in the pathway amino-acid biosynthesis; L-arginine biosynthesis. Its activity is regulated as follows. Carboxylation at Lys-302 increases the catalytic activity of the enzyme. Is potently inhibited by N(alpha)-acetyl-N(delta)-phosphonoacetyl-L-ornithine (PALAO). In terms of biological role, catalyzes the transfer of the carbamoyl group from carbamoyl phosphate to the delta-amino group of N(2)-acetyl-L-ornithine to produce N(2)-acetyl-L-citrulline. This is a step in an alternative arginine biosynthesis pathway. The enzyme has no activity with ornithine. The protein is N-acetylornithine carbamoyltransferase of Xanthomonas campestris pv. campestris (strain ATCC 33913 / DSM 3586 / NCPPB 528 / LMG 568 / P 25).